We begin with the raw amino-acid sequence, 156 residues long: MKFILYNLATAKEPWADEVSELYKKKISFFIPFDIQSLKAKKSAREDADFKRNEESELILKNINSDDYVVLFDERGSVLDSIQFSKKVENILGSSKKRAIFIIGGAFGVNEEVRKRADLKVALSPMVMNHLMAQAMSLEQIYRAFTIIKKIPYHNI.

S-adenosyl-L-methionine-binding positions include Gly-104 and 123-128 (LSPMVM).

The protein belongs to the RNA methyltransferase RlmH family. As to quaternary structure, homodimer.

It is found in the cytoplasm. The catalysed reaction is pseudouridine(1915) in 23S rRNA + S-adenosyl-L-methionine = N(3)-methylpseudouridine(1915) in 23S rRNA + S-adenosyl-L-homocysteine + H(+). In terms of biological role, specifically methylates the pseudouridine at position 1915 (m3Psi1915) in 23S rRNA. This chain is Ribosomal RNA large subunit methyltransferase H, found in Bdellovibrio bacteriovorus (strain ATCC 15356 / DSM 50701 / NCIMB 9529 / HD100).